Consider the following 314-residue polypeptide: Cytochrome f (314 aa).

Positions 1–30 are cleaved as a signal peptide; sequence MATNKFFKSLLFTLTIAISSFGFCVENSSA. Heme contacts are provided by Tyr-31, Cys-51, Cys-54, and His-55. The chain crosses the membrane as a helical span at residues 280–300; sequence ILGYLAFCFCLLLTQVLLVLK.

The protein belongs to the cytochrome f family. The 4 large subunits of the cytochrome b6-f complex are cytochrome b6, subunit IV (17 kDa polypeptide, petD), cytochrome f and the Rieske protein, while the 4 small subunits are PetG, PetL, PetM and PetN. The complex functions as a dimer. Heme serves as cofactor.

Its subcellular location is the plastid. It is found in the chloroplast thylakoid membrane. Component of the cytochrome b6-f complex, which mediates electron transfer between photosystem II (PSII) and photosystem I (PSI), cyclic electron flow around PSI, and state transitions. The sequence is that of Cytochrome f from Thalassiosira pseudonana (Marine diatom).